Here is a 254-residue protein sequence, read N- to C-terminus: MARRRQLYEGKAKVLFEGPEPGTLVQYFKDDATAGNGAKSGIITGKGVLNNRISEYLMLKLHEINIPTHFIRRLNMREQLIREVEIIPLEVVVRNVAAGSLSKRLGIPEGTRLPRTIIEYYYKNDALGDPMVSEEHIAAFNWAAPQDMDDMNQLALRTNDFLMGMFTAVGITLVDFKLEFGRIWEGEEMRILLADEISPDNCRLWDSKTNEKMDKDRFRRDMGRVEEAYQEVAKRLGILPESGNGDLKGPEAVQ.

The protein belongs to the SAICAR synthetase family.

It catalyses the reaction 5-amino-1-(5-phospho-D-ribosyl)imidazole-4-carboxylate + L-aspartate + ATP = (2S)-2-[5-amino-1-(5-phospho-beta-D-ribosyl)imidazole-4-carboxamido]succinate + ADP + phosphate + 2 H(+). The protein operates within purine metabolism; IMP biosynthesis via de novo pathway; 5-amino-1-(5-phospho-D-ribosyl)imidazole-4-carboxamide from 5-amino-1-(5-phospho-D-ribosyl)imidazole-4-carboxylate: step 1/2. This Gluconobacter oxydans (strain 621H) (Gluconobacter suboxydans) protein is Phosphoribosylaminoimidazole-succinocarboxamide synthase.